The sequence spans 244 residues: ATP synthase subunit a (244 aa).

7 consecutive transmembrane segments (helical) span residues 17–37 (LSNVLMITIASIIVLLIAVLT), 74–94 (PFLALGVTLLMYIFVSNMLGL), 112–132 (DPAITMTLAVMVMGLTHYYGV), 148–168 (IPLLVPLKIIEEFANTLTLGL), 171–191 (YGNIFAGEILLGLLAGLATNF), 196–216 (IALGIIGTLGAIVPMIVWQAF), and 217–237 (SLFVGTIQAFIFTMLTMVYIS).

The protein belongs to the ATPase A chain family. In terms of assembly, F-type ATPases have 2 components, CF(1) - the catalytic core - and CF(0) - the membrane proton channel. CF(1) has five subunits: alpha(3), beta(3), gamma(1), delta(1), epsilon(1). CF(0) has three main subunits: a(1), b(2) and c(9-12). The alpha and beta chains form an alternating ring which encloses part of the gamma chain. CF(1) is attached to CF(0) by a central stalk formed by the gamma and epsilon chains, while a peripheral stalk is formed by the delta and b chains.

The protein localises to the cell membrane. Its function is as follows. Key component of the proton channel; it plays a direct role in the translocation of protons across the membrane. The chain is ATP synthase subunit a from Bacillus pumilus (strain SAFR-032).